Reading from the N-terminus, the 239-residue chain is Sensory rhodopsin-2 (239 aa).

At 1–3 the chain is on the extracellular side; the sequence is MVG. Residues 4–25 traverse the membrane as a helical segment; it reads LTTLFWLGAIGMLVGTLAFAWA. Topologically, residues 26–33 are cytoplasmic; it reads GRDAGSGE. Residues 34–55 form a helical membrane-spanning segment; the sequence is RRYYVTLVGISGIAAVAYVVMA. Over 56 to 69 the chain is Extracellular; sequence LGVGWVPVAERTVF. Residues 70–91 traverse the membrane as a helical segment; the sequence is APRYIDWILTTPLIVYFLGLLA. The Cytoplasmic portion of the chain corresponds to 92 to 94; it reads GLD. A helical transmembrane segment spans residues 95 to 117; the sequence is SREFGIVITLNTVVMLAGFAGAM. The Extracellular segment spans residues 118–121; it reads VPGI. Residues 122-149 traverse the membrane as a helical segment; the sequence is ERYALFGMGAVAFLGLVYYLVGPMTESA. Residues 150-153 lie on the Cytoplasmic side of the membrane; it reads SQRS. A helical transmembrane segment spans residues 154–181; sequence SGIKSLYVRLRNLTVILWAIYPFIWLLG. The Extracellular portion of the chain corresponds to 182 to 189; sequence PPGVALLT. A helical transmembrane segment spans residues 190–222; it reads PTVDVALIVYLDLVTKVGFGFIALDAAATLRAE. N6-(retinylidene)lysine is present on Lys-205. Residues 223-239 are Cytoplasmic-facing; that stretch reads HGESLAGVDTDAPAVAD.

The protein belongs to the archaeal/bacterial/fungal opsin family. As to quaternary structure, homodimer. Interacts with HTR-II.

The protein resides in the cell membrane. Functionally, photophobic photoreceptor responsible for the negative phototaxis. Activates the sensory rhodopsin II transducer (HTR-II) in response to blue light. The protein is Sensory rhodopsin-2 (sop2) of Natronomonas pharaonis (Natronobacterium pharaonis).